The following is a 310-amino-acid chain: Thioredoxin reductase (310 aa).

34 to 41 contacts FAD; that stretch reads NGMQPGGQ. Residues Cys-135 and Cys-138 are joined by a disulfide bond. Position 281-290 (281-290) interacts with FAD; it reads DVQDKIYRQA.

Belongs to the class-II pyridine nucleotide-disulfide oxidoreductase family. As to quaternary structure, homodimer. Requires FAD as cofactor.

The protein resides in the cytoplasm. It carries out the reaction [thioredoxin]-dithiol + NADP(+) = [thioredoxin]-disulfide + NADPH + H(+). This is Thioredoxin reductase (trxB) from Rickettsia prowazekii (strain Madrid E).